The chain runs to 512 residues: ATP synthase subunit alpha (512 aa).

Position 169 to 176 (169 to 176 (GDRQTGKT)) interacts with ATP.

It belongs to the ATPase alpha/beta chains family. As to quaternary structure, F-type ATPases have 2 components, CF(1) - the catalytic core - and CF(0) - the membrane proton channel. CF(1) has five subunits: alpha(3), beta(3), gamma(1), delta(1), epsilon(1). CF(0) has four main subunits: a(1), b(1), b'(1) and c(9-12).

It is found in the cell inner membrane. It carries out the reaction ATP + H2O + 4 H(+)(in) = ADP + phosphate + 5 H(+)(out). Its function is as follows. Produces ATP from ADP in the presence of a proton gradient across the membrane. The alpha chain is a regulatory subunit. The sequence is that of ATP synthase subunit alpha from Roseobacter denitrificans (strain ATCC 33942 / OCh 114) (Erythrobacter sp. (strain OCh 114)).